Consider the following 513-residue polypeptide: Histidine ammonia-lyase (513 aa).

Positions 144–146 form a cross-link, 5-imidazolinone (Ala-Gly); that stretch reads ASG. Ser-145 carries the 2,3-didehydroalanine (Ser) modification.

It belongs to the PAL/histidase family. In terms of processing, contains an active site 4-methylidene-imidazol-5-one (MIO), which is formed autocatalytically by cyclization and dehydration of residues Ala-Ser-Gly.

The protein localises to the cytoplasm. It carries out the reaction L-histidine = trans-urocanate + NH4(+). Its pathway is amino-acid degradation; L-histidine degradation into L-glutamate; N-formimidoyl-L-glutamate from L-histidine: step 1/3. This chain is Histidine ammonia-lyase, found in Streptococcus pyogenes serotype M49 (strain NZ131).